A 210-amino-acid chain; its full sequence is Ras-related protein Rab-8 (210 aa).

A GTP-binding site is contributed by glycine 15–threonine 22. The Effector region motif lies at phenylalanine 37 to phenylalanine 45. GTP contacts are provided by residues aspartate 63 to glutamine 67 and asparagine 121 to aspartate 124. Cysteine 207 carries the cysteine methyl ester modification. The S-geranylgeranyl cysteine moiety is linked to residue cysteine 207. Positions serine 208–leucine 210 are cleaved as a propeptide — removed in mature form.

Belongs to the small GTPase superfamily. Rab family.

The protein localises to the cell membrane. The sequence is that of Ras-related protein Rab-8 from Diplobatis ommata (Ocellated electric ray).